The primary structure comprises 489 residues: Betaine aldehyde dehydrogenase (489 aa).

The K(+) site is built by threonine 26 and aspartate 93. NAD(+) is bound at residue 150-152 (GAW). The active-site Charge relay system is the lysine 162. Residue 176-179 (KPSE) coordinates NAD(+). K(+) is bound at residue valine 180. 229-232 (GVET) provides a ligand contact to NAD(+). Leucine 245 is a binding site for K(+). Residue glutamate 251 is the Proton acceptor of the active site. NAD(+) contacts are provided by glycine 253, cysteine 285, and glutamate 386. The active-site Nucleophile is cysteine 285. Position 285 is a cysteine sulfenic acid (-SOH) (cysteine 285). Residues lysine 456 and glycine 459 each contribute to the K(+) site. Glutamate 463 functions as the Charge relay system in the catalytic mechanism.

The protein belongs to the aldehyde dehydrogenase family. Dimer of dimers. K(+) is required as a cofactor.

The enzyme catalyses betaine aldehyde + NAD(+) + H2O = glycine betaine + NADH + 2 H(+). It functions in the pathway amine and polyamine biosynthesis; betaine biosynthesis via choline pathway; betaine from betaine aldehyde: step 1/1. Functionally, involved in the biosynthesis of the osmoprotectant glycine betaine. Catalyzes the irreversible oxidation of betaine aldehyde to the corresponding acid. This chain is Betaine aldehyde dehydrogenase, found in Burkholderia cenocepacia (strain ATCC BAA-245 / DSM 16553 / LMG 16656 / NCTC 13227 / J2315 / CF5610) (Burkholderia cepacia (strain J2315)).